A 481-amino-acid chain; its full sequence is MEIKMKNNFETVIGIEVHVVLSSKTKMFSSSKSSHTDPKNTNISPIDLGHPGTMPLPNKRCIEKAIVLAKALDMEIEKNISFDRKNYFYQDLPKGFQITQQFHPIGKNGKIYLDENNFVDIERIHLEEDTAKQTKEDDGTILLDYNRSGIPLIEIVTKPCIKSSTEAGLFLKKLRRILTFNDISDAKMEEGSLRVDVNISVKPIGSKEFGTRVEIKNINSINNVEKAIEYESNLQAEQILKQEEVLMATKRFNDKTLTTEFMRLKTTNVDYHYMVEPNIFVRKISDDFITDVIKNNYTDIKSIEADLLKNNVSQEFINLLMDDYELFQKFKFINDEIKDCNEVIKWLCVEFVGSLNKVNLKLKDATDFQLNQLLKMMKYLLKDASINAKQGKEIVKLLIETNKDIDTLIEENNFKQITDKNVLRPILEKYVEANKPMLDQYDSRPERVEKFFIGMVMKDTNGQANPNVVTEIFNEILKLNK.

A disordered region spans residues serine 29 to histidine 50.

This sequence belongs to the GatB/GatE family. GatB subfamily. Heterotrimer of A, B and C subunits.

It carries out the reaction L-glutamyl-tRNA(Gln) + L-glutamine + ATP + H2O = L-glutaminyl-tRNA(Gln) + L-glutamate + ADP + phosphate + H(+). The enzyme catalyses L-aspartyl-tRNA(Asn) + L-glutamine + ATP + H2O = L-asparaginyl-tRNA(Asn) + L-glutamate + ADP + phosphate + 2 H(+). Its function is as follows. Allows the formation of correctly charged Asn-tRNA(Asn) or Gln-tRNA(Gln) through the transamidation of misacylated Asp-tRNA(Asn) or Glu-tRNA(Gln) in organisms which lack either or both of asparaginyl-tRNA or glutaminyl-tRNA synthetases. The reaction takes place in the presence of glutamine and ATP through an activated phospho-Asp-tRNA(Asn) or phospho-Glu-tRNA(Gln). The polypeptide is Aspartyl/glutamyl-tRNA(Asn/Gln) amidotransferase subunit B (Malacoplasma penetrans (strain HF-2) (Mycoplasma penetrans)).